A 474-amino-acid chain; its full sequence is Synaptotagmin-17 (474 aa).

The interval 60 to 117 (WLMASRSNDKDGDSVHTASDVPLTPRTNSPDGRRSSSDTSKSTYSLTRRISSLDSRRP) is disordered. A compositionally biased stretch (low complexity) spans 96–117 (SDTSKSTYSLTRRISSLDSRRP). A phosphoserine mark is found at Ser-118 and Ser-119. C2 domains are found at residues 184-310 (QLGM…HWWK) and 321-455 (ELGE…EQWH).

The protein belongs to the synaptotagmin family. Expressed in brain and kidney.

It is found in the membrane. Functionally, plays a role in dendrite formation by melanocytes. This is Synaptotagmin-17 (Syt17) from Rattus norvegicus (Rat).